Consider the following 518-residue polypeptide: ATP synthase subunit alpha (518 aa).

169–176 (GDRQTGKT) serves as a coordination point for ATP.

The protein belongs to the ATPase alpha/beta chains family. In terms of assembly, F-type ATPases have 2 components, CF(1) - the catalytic core - and CF(0) - the membrane proton channel. CF(1) has five subunits: alpha(3), beta(3), gamma(1), delta(1), epsilon(1). CF(0) has three main subunits: a(1), b(2) and c(9-12). The alpha and beta chains form an alternating ring which encloses part of the gamma chain. CF(1) is attached to CF(0) by a central stalk formed by the gamma and epsilon chains, while a peripheral stalk is formed by the delta and b chains.

It localises to the cell membrane. It carries out the reaction ATP + H2O + 4 H(+)(in) = ADP + phosphate + 5 H(+)(out). Its function is as follows. Produces ATP from ADP in the presence of a proton gradient across the membrane. The alpha chain is a regulatory subunit. The protein is ATP synthase subunit alpha of Mycoplasma pneumoniae (strain ATCC 29342 / M129 / Subtype 1) (Mycoplasmoides pneumoniae).